The sequence spans 349 residues: Glycerol-3-phosphate dehydrogenase [NAD(P)+] (349 aa).

NADPH is bound by residues W20, R43, R44, and K117. Positions 117 and 147 each coordinate sn-glycerol 3-phosphate. A151 provides a ligand contact to NADPH. Residues K202, D255, S265, R266, and N267 each coordinate sn-glycerol 3-phosphate. Residue K202 is the Proton acceptor of the active site. R266 is a binding site for NADPH. 2 residues coordinate NADPH: V297 and E299.

This sequence belongs to the NAD-dependent glycerol-3-phosphate dehydrogenase family.

The protein localises to the cytoplasm. The catalysed reaction is sn-glycerol 3-phosphate + NAD(+) = dihydroxyacetone phosphate + NADH + H(+). It carries out the reaction sn-glycerol 3-phosphate + NADP(+) = dihydroxyacetone phosphate + NADPH + H(+). It functions in the pathway membrane lipid metabolism; glycerophospholipid metabolism. In terms of biological role, catalyzes the reduction of the glycolytic intermediate dihydroxyacetone phosphate (DHAP) to sn-glycerol 3-phosphate (G3P), the key precursor for phospholipid synthesis. The polypeptide is Glycerol-3-phosphate dehydrogenase [NAD(P)+] (Mycobacterium leprae (strain TN)).